The following is a 912-amino-acid chain: Probable transmembrane GTPase FZO-like, chloroplastic (912 aa).

The transit peptide at 1 to 54 (MRTLISHRQCVTSPFLISAASPPFPGRCFKLSSFTPPRHRRFSSLSIRNISHES) directs the protein to the chloroplast. Positions 51–71 (SHESADQTSSSRPRTLYPGGY) are disordered. The Stromal segment spans residues 55 to 773 (ADQTSSSRPR…SKRLEQDIRE (719 aa)). GTP is bound by residues 359 to 364 (NSGKST) and serine 521. A helical transmembrane segment spans residues 774–794 (VFFVTVGGLGAAGLSASLLTS). Residues 795–801 (VLPTTLE) lie on the Chloroplast intermembrane side of the membrane. Residues 802-822 (DLLALGLCSAGGYVAIANFPY) form a helical membrane-spanning segment. At 823–912 (RRQAIIGKVN…LHVSRDEMRL (90 aa)) the chain is on the stromal side. Residues 877–904 (DRLLGIQKELSDIRSKLQLLQVDIDNLH) are a coiled coil.

Belongs to the TRAFAC class dynamin-like GTPase superfamily. Dynamin/Fzo/YdjA family. Mitofusin subfamily.

Its subcellular location is the plastid. It localises to the chloroplast inner membrane. It is found in the chloroplast thylakoid membrane. Its function is as follows. Probable membrane-remodeling GTPase that plays a unique role in the in the determination of thylakoid and chloroplast morphology and regulates organization of the thylakoid network. Not involved in the determination of mitochondrial morphology or ultrastructure. The polypeptide is Probable transmembrane GTPase FZO-like, chloroplastic (Arabidopsis thaliana (Mouse-ear cress)).